The following is a 710-amino-acid chain: Choline transporter-like protein 4 (710 aa).

Residues 1-34 lie on the Cytoplasmic side of the membrane; it reads MGGKQRDEDDEAYGKPVKYDPSFRGPIKNRSCTD. Residues 35 to 55 traverse the membrane as a helical segment; it reads VICCVLFLLFILGYIVVGIVA. The Extracellular portion of the chain corresponds to 56–229; that stretch reads WLYGDPRQVL…KIFEDFAQSW (174 aa). N-linked (GlcNAc...) asparagine glycans are attached at residues Asn69, Asn155, and Asn197. Residues 230 to 250 form a helical membrane-spanning segment; it reads YWILVALGVALVLSLLFILLL. Residues 251–252 lie on the Cytoplasmic side of the membrane; that stretch reads RL. A helical membrane pass occupies residues 253 to 273; it reads VAGPLVLVLILGVLGVLAYGI. Residues 274 to 309 are Extracellular-facing; it reads YYCWEEYRVLRDKGASISQLGFTTNLSAYQSVQETW. A glycan (N-linked (GlcNAc...) asparagine) is linked at Asn298. Residues 310–330 traverse the membrane as a helical segment; that stretch reads LAALIVLAVLEAILLLMLIFL. Over 331-358 the chain is Cytoplasmic; sequence RQRIRIAIALLKEASKAVGQMMSTMFYP. A helical transmembrane segment spans residues 359–379; it reads LVTFVLLLICIAYWAMTALYL. Residues 380-455 are Extracellular-facing; it reads ATSGQPQYVL…GVLGLFWTLN (76 aa). N-linked (GlcNAc...) asparagine glycosylation is found at Asn393, Asn405, and Asn416. The helical transmembrane segment at 456–476 threads the bilayer; sequence WVLALGQCVLAGAFASFYWAF. Topologically, residues 477 to 501 are cytoplasmic; that stretch reads HKPQDIPTFPLISAFIRTLRYHTGS. A helical membrane pass occupies residues 502 to 522; that stretch reads LAFGALILTLVQIARVILEYI. Over 523–560 the chain is Extracellular; it reads DHKLRGVQNPVARCIMCCFKCCLWCLEKFIKFLNRNAY. A helical membrane pass occupies residues 561–581; it reads IMIAIYGKNFCVSAKNAFMLL. Over 582–597 the chain is Cytoplasmic; sequence MRNIVRVVVLDKVTDL. A helical transmembrane segment spans residues 598 to 618; it reads LLFFGKLLVVGGVGVLSFFFF. Over 619–638 the chain is Extracellular; sequence SGRIPGLGKDFKSPHLNYYW. The helical transmembrane segment at 639–659 threads the bilayer; the sequence is LPIMTSILGAYVIASGFFSVF. The Cytoplasmic segment spans residues 660–710; it reads GMCVDTLFLCFLEDLERNNGSLDRPYYMSKSLLKILGKKNEAPPDNKKRKK.

This sequence belongs to the CTL (choline transporter-like) family. In terms of processing, N-glycosylated; N-glycosylation of Asn-69, Asn-155 and Asn-393 is required for a proper thiamine pyrophosphate uptake. Highly expressed in colon, also detected in prostate, trachea and lung. Isoform 3 is also expressed in colon but a lower levels. As to expression, expressed in colon at low levels.

It localises to the membrane. The protein localises to the apical cell membrane. The catalysed reaction is choline(out) + n H(+)(in) = choline(in) + n H(+)(out). The enzyme catalyses thiamine diphosphate(out) = thiamine diphosphate(in). In terms of biological role, choline transporter that plays a role in the choline-acetylcholine system and is required to the efferent innervation of hair cells in the olivocochlear bundle for the maintenance of physiological function of outer hair cells and the protection of hair cells from acoustic injury. Also described as a thiamine pyrophosphate transporter in colon, may mediate the absorption of microbiota-generated thiamine pyrophosphate and contribute to host thiamine (vitamin B1) homeostasis. Also has thiamine pyrophosphate transporter activity. The protein is Choline transporter-like protein 4 of Homo sapiens (Human).